We begin with the raw amino-acid sequence, 488 residues long: Glutamyl-tRNA(Gln) amidotransferase subunit A (488 aa).

Catalysis depends on charge relay system residues lysine 80 and serine 155. The active-site Acyl-ester intermediate is the serine 179.

It belongs to the amidase family. GatA subfamily. In terms of assembly, heterotrimer of A, B and C subunits.

It catalyses the reaction L-glutamyl-tRNA(Gln) + L-glutamine + ATP + H2O = L-glutaminyl-tRNA(Gln) + L-glutamate + ADP + phosphate + H(+). In terms of biological role, allows the formation of correctly charged Gln-tRNA(Gln) through the transamidation of misacylated Glu-tRNA(Gln) in organisms which lack glutaminyl-tRNA synthetase. The reaction takes place in the presence of glutamine and ATP through an activated gamma-phospho-Glu-tRNA(Gln). The sequence is that of Glutamyl-tRNA(Gln) amidotransferase subunit A from Chloroflexus aggregans (strain MD-66 / DSM 9485).